Here is a 121-residue protein sequence, read N- to C-terminus: UPF0102 protein Mvan_2202 (121 aa).

Belongs to the UPF0102 family.

This Mycolicibacterium vanbaalenii (strain DSM 7251 / JCM 13017 / BCRC 16820 / KCTC 9966 / NRRL B-24157 / PYR-1) (Mycobacterium vanbaalenii) protein is UPF0102 protein Mvan_2202.